The following is a 239-amino-acid chain: Ribonuclease PH (239 aa).

Phosphate-binding positions include Arg-87 and 125–127 (GTR).

The protein belongs to the RNase PH family. In terms of assembly, homohexameric ring arranged as a trimer of dimers.

The enzyme catalyses tRNA(n+1) + phosphate = tRNA(n) + a ribonucleoside 5'-diphosphate. In terms of biological role, phosphorolytic 3'-5' exoribonuclease that plays an important role in tRNA 3'-end maturation. Removes nucleotide residues following the 3'-CCA terminus of tRNAs; can also add nucleotides to the ends of RNA molecules by using nucleoside diphosphates as substrates, but this may not be physiologically important. Probably plays a role in initiation of 16S rRNA degradation (leading to ribosome degradation) during starvation. The chain is Ribonuclease PH from Saccharophagus degradans (strain 2-40 / ATCC 43961 / DSM 17024).